The chain runs to 274 residues: Urease accessory protein UreD (274 aa).

It belongs to the UreD family. As to quaternary structure, ureD, UreF and UreG form a complex that acts as a GTP-hydrolysis-dependent molecular chaperone, activating the urease apoprotein by helping to assemble the nickel containing metallocenter of UreC. The UreE protein probably delivers the nickel.

Its subcellular location is the cytoplasm. Required for maturation of urease via the functional incorporation of the urease nickel metallocenter. This chain is Urease accessory protein UreD, found in Klebsiella pneumoniae subsp. pneumoniae (strain ATCC 700721 / MGH 78578).